The sequence spans 588 residues: Cryptochrome-1 (588 aa).

The Photolyase/cryptochrome alpha/beta domain maps to valine 3–leucine 132. Residue lysine 11 forms a Glycyl lysine isopeptide (Lys-Gly) (interchain with G-Cter in ubiquitin) linkage. An LIR 1 motif is present at residues asparagine 50–phenylalanine 54. Serine 71 carries the phosphoserine; by AMPK modification. An LIR 2 motif is present at residues aspartate 82 to leucine 87. Lysine 107 is covalently cross-linked (Glycyl lysine isopeptide (Lys-Gly) (interchain with G-Cter in ubiquitin)). The LIR 3 signature appears at lysine 151 to leucine 156. Lysine 159 participates in a covalent cross-link: Glycyl lysine isopeptide (Lys-Gly) (interchain with G-Cter in ubiquitin). Serine 247 is subject to Phosphoserine; by MAPK. Residue serine 252 participates in FAD binding. Short sequence motifs (LIR) lie at residues leucine 255 to leucine 260 and aspartate 271 to valine 276. Residue serine 280 is modified to Phosphoserine; by AMPK. The LIR 6 motif lies at serine 285–leucine 290. Glutamine 289 contacts FAD. Lysine 329 participates in a covalent cross-link: Glycyl lysine isopeptide (Lys-Gly) (interchain with G-Cter in ubiquitin). The short motif at threonine 335–tryptophan 339 is the LIR 7 element. Histidine 355 provides a ligand contact to FAD. Residues tryptophan 371–methionine 470 are required for inhibition of CLOCK-BMAL1-mediated transcription. Residues lysine 379–leucine 384 carry the LIR 8 motif. Position 387-389 (aspartate 387–aspartate 389) interacts with FAD. 3 short sequence motifs (LIR) span residues glycine 395–leucine 400, histidine 411–valine 416, and arginine 430–valine 435. The tract at residues valine 471–arginine 493 is interaction with TIMELESS. Lysine 485 participates in a covalent cross-link: Glycyl lysine isopeptide (Lys-Gly) (interchain with G-Cter in ubiquitin). 2 consecutive short sequence motifs (LIR) follow at residues glutamine 486–leucine 491 and serine 492–leucine 497. Positions glycine 511–asparagine 588 are disordered. Positions aspartate 545 to arginine 568 are enriched in polar residues. Lysine 567 is covalently cross-linked (Glycyl lysine isopeptide (Lys-Gly) (interchain with G-Cter in ubiquitin)). Serine 570 bears the Phosphoserine mark.

It belongs to the DNA photolyase class-1 family. As to quaternary structure, component of the circadian core oscillator, which includes the CRY proteins, CLOCK or NPAS2, BMAL1 or BMAL2, CSNK1D and/or CSNK1E, TIMELESS, and the PER proteins. Interacts directly with TIMELESS. Interacts directly with PER1, PER2 and PER3; interaction with PER2 inhibits its ubiquitination and vice versa. Interacts with FBXL21. Interacts with FBXL3. Interacts with CLOCK-BMAL1 independently of PER2 and DNA. Interacts with HDAC1, HDAC2 and SIN3B. Interacts with nuclear receptors AR, NR1D1, NR3C1/GR, RORA and RORC; the interaction with at least NR3C1/GR is ligand dependent. Interacts with PRKDC. Interacts with the G protein subunit alpha GNAS; the interaction may block GPCR-mediated regulation of cAMP concentrations. Interacts with PRMT5. Interacts with EZH2. Interacts with MYBBP1A, DOCK7, HNRNPU, RPL7A, RPL8 and RPS3. Interacts with PPP5C (via TPR repeats). Interacts with MAP1LC3B. Interacts with CLOCK. Interacts with BMAL1. Interacts weakly with HDAC3; this interaction is enhanced in the presence of FBXL3. Interacts with TRIM28, KCTD5 and DDB1. Interacts with FOXO1. Interacts with DTL and DDB1-CUL4A complex. Interacts with HNF4A. Interacts with PSMD2 in a KDM8-dependent manner. Interacts with KDM8 in a FBXL3-dependent manner. Interacts with PPARG in a ligand-dependent manner. Interacts with PPARD (via domain NR LBD) and NR1I2 (via domain NR LBD) in a ligand-dependent manner. Interacts with PPARA, NR1I3 and VDR. Requires FAD as cofactor. It depends on (6R)-5,10-methylene-5,6,7,8-tetrahydrofolate as a cofactor. Post-translationally, phosphorylation on Ser-247 by MAPK is important for the inhibition of CLOCK-BMAL1-mediated transcriptional activity. Phosphorylation by CSNK1E requires interaction with PER1 or PER2. Phosphorylation at Ser-71 and Ser-280 by AMPK decreases protein stability. Phosphorylation at Ser-570 exhibits a robust circadian rhythm with a peak at CT8, increases protein stability, prevents SCF(FBXL3)-mediated degradation and is antagonized by interaction with PRKDC. Ubiquitinated by the SCF(FBXL3) and SCF(FBXL21) complexes, regulating the balance between degradation and stabilization. The SCF(FBXL3) complex is mainly nuclear and mediates ubiquitination and subsequent degradation of CRY1. In contrast, cytoplasmic SCF(FBXL21) complex-mediated ubiquitination leads to stabilize CRY1 and counteract the activity of the SCF(FBXL3) complex. The SCF(FBXL3) and SCF(FBXL21) complexes probably mediate ubiquitination at different Lys residues. Ubiquitination at Lys-11 and Lys-107 are specifically ubiquitinated by the SCF(FBXL21) complex but not by the SCF(FBXL3) complex. Ubiquitination may be inhibited by PER2. Deubiquitinated by USP7. In terms of processing, undergoes autophagy-mediated degradation in the liver in a time-dependent manner. Autophagic degradation of CRY1 (an inhibitor of gluconeogenesis) occurs during periods of reduced feeding allowing induction of gluconeogenesis and maintenance of blood glucose levels.

The protein localises to the cytoplasm. It localises to the nucleus. Functionally, transcriptional repressor which forms a core component of the circadian clock. The circadian clock, an internal time-keeping system, regulates various physiological processes through the generation of approximately 24 hour circadian rhythms in gene expression, which are translated into rhythms in metabolism and behavior. It is derived from the Latin roots 'circa' (about) and 'diem' (day) and acts as an important regulator of a wide array of physiological functions including metabolism, sleep, body temperature, blood pressure, endocrine, immune, cardiovascular, and renal function. Consists of two major components: the central clock, residing in the suprachiasmatic nucleus (SCN) of the brain, and the peripheral clocks that are present in nearly every tissue and organ system. Both the central and peripheral clocks can be reset by environmental cues, also known as Zeitgebers (German for 'timegivers'). The predominant Zeitgeber for the central clock is light, which is sensed by retina and signals directly to the SCN. The central clock entrains the peripheral clocks through neuronal and hormonal signals, body temperature and feeding-related cues, aligning all clocks with the external light/dark cycle. Circadian rhythms allow an organism to achieve temporal homeostasis with its environment at the molecular level by regulating gene expression to create a peak of protein expression once every 24 hours to control when a particular physiological process is most active with respect to the solar day. Transcription and translation of core clock components (CLOCK, NPAS2, BMAL1, BMAL2, PER1, PER2, PER3, CRY1 and CRY2) plays a critical role in rhythm generation, whereas delays imposed by post-translational modifications (PTMs) are important for determining the period (tau) of the rhythms (tau refers to the period of a rhythm and is the length, in time, of one complete cycle). A diurnal rhythm is synchronized with the day/night cycle, while the ultradian and infradian rhythms have a period shorter and longer than 24 hours, respectively. Disruptions in the circadian rhythms contribute to the pathology of cardiovascular diseases, cancer, metabolic syndromes and aging. A transcription/translation feedback loop (TTFL) forms the core of the molecular circadian clock mechanism. Transcription factors, CLOCK or NPAS2 and BMAL1 or BMAL2, form the positive limb of the feedback loop, act in the form of a heterodimer and activate the transcription of core clock genes and clock-controlled genes (involved in key metabolic processes), harboring E-box elements (5'-CACGTG-3') within their promoters. The core clock genes: PER1/2/3 and CRY1/2 which are transcriptional repressors form the negative limb of the feedback loop and interact with the CLOCK|NPAS2-BMAL1|BMAL2 heterodimer inhibiting its activity and thereby negatively regulating their own expression. This heterodimer also activates nuclear receptors NR1D1/2 and RORA/B/G, which form a second feedback loop and which activate and repress BMAL1 transcription, respectively. CRY1 and CRY2 have redundant functions but also differential and selective contributions at least in defining the pace of the SCN circadian clock and its circadian transcriptional outputs. More potent transcriptional repressor in cerebellum and liver than CRY2, though more effective in lengthening the period of the SCN oscillator. On its side, CRY2 seems to play a critical role in tuning SCN circadian period by opposing the action of CRY1. With CRY2, is dispensable for circadian rhythm generation but necessary for the development of intercellular networks for rhythm synchrony. Capable of translocating circadian clock core proteins such as PER proteins to the nucleus. Interacts with CLOCK-BMAL1 independently of PER proteins and is found at CLOCK-BMAL1-bound sites, suggesting that CRY may act as a molecular gatekeeper to maintain CLOCK-BMAL1 in a poised and repressed state until the proper time for transcriptional activation. Represses the CLOCK-BMAL1 induced transcription of BHLHE40/DEC1, ATF4, MTA1, KLF10 and NAMPT. May repress circadian target genes expression in collaboration with HDAC1 and HDAC2 through histone deacetylation. Mediates the clock-control activation of ATR and modulates ATR-mediated DNA damage checkpoint. In liver, mediates circadian regulation of cAMP signaling and gluconeogenesis by binding to membrane-coupled G proteins and blocking glucagon-mediated increases in intracellular cAMP concentrations and CREB1 phosphorylation. Inhibits hepatic gluconeogenesis by decreasing nuclear FOXO1 levels that down-regulates gluconeogenic gene expression. Besides its role in the maintenance of the circadian clock, is also involved in the regulation of other processes. Represses glucocorticoid receptor NR3C1/GR-induced transcriptional activity by binding to glucocorticoid response elements (GREs). Plays a key role in glucose and lipid metabolism modulation, in part, through the transcriptional regulation of genes involved in these pathways, such as LEP or ACSL4. Represses PPARD and its target genes in the skeletal muscle and limits exercise capacity. Plays an essential role in the generation of circadian rhythms in the retina. Represses the transcriptional activity of NR1I2. In Rattus norvegicus (Rat), this protein is Cryptochrome-1 (Cry1).